A 53-amino-acid polypeptide reads, in one-letter code: Ovomucoid (53 aa).

Residues 3-53 (VDCSEYPQPTCTTEHRPVCGSNNETYGNKCNFCNAVVKSNGTLTVSHFGKC) enclose the Kazal-like domain. Intrachain disulfides connect Cys-5/Cys-35, Cys-13/Cys-32, and Cys-21/Cys-53. Asn-42 is a glycosylation site (N-linked (GlcNAc...) asparagine).

The protein localises to the secreted. The chain is Ovomucoid from Polyplectron bicalcaratum (Grey peacock-pheasant).